The primary structure comprises 187 residues: MSSDAVDETHENARQEVIAVDADDNEEGLVNRLDAHTGDGVRHRAFTALLFDENDRILLAQRAANKRLWDTHWDGTVASHPVEGQTQVEATEERLEEELGVDPSQYQNLRVTDRFEYKRYYENAGLEWEVCAVLQATLHDTSLEPNPEEVDGLMWVPYERLREHPEYYRQLRLCPWFEIAMRRDEER.

Mn(2+) contacts are provided by histidine 36, histidine 43, and histidine 80. The Nudix hydrolase domain maps to 41 to 178; that stretch reads VRHRAFTALL…RQLRLCPWFE (138 aa). Glutamate 98 is a Mg(2+) binding site. Mn(2+)-binding residues include glutamate 127 and glutamate 129. The active site involves glutamate 129.

It belongs to the IPP isomerase type 1 family. Mg(2+) is required as a cofactor. The cofactor is Mn(2+).

The protein localises to the cytoplasm. It carries out the reaction isopentenyl diphosphate = dimethylallyl diphosphate. It functions in the pathway isoprenoid biosynthesis; dimethylallyl diphosphate biosynthesis; dimethylallyl diphosphate from isopentenyl diphosphate: step 1/1. Its function is as follows. Catalyzes the 1,3-allylic rearrangement of the homoallylic substrate isopentenyl (IPP) to its highly electrophilic allylic isomer, dimethylallyl diphosphate (DMAPP). The protein is Isopentenyl-diphosphate Delta-isomerase of Haloarcula marismortui (strain ATCC 43049 / DSM 3752 / JCM 8966 / VKM B-1809) (Halobacterium marismortui).